A 360-amino-acid polypeptide reads, in one-letter code: Phospho-N-acetylmuramoyl-pentapeptide-transferase (360 aa).

10 helical membrane-spanning segments follow: residues 21–41 (YLSF…LWMG), 73–93 (TMGG…WADL), 94–114 (TNPY…VGFV), 132–152 (WKYF…YAHG), 168–188 (VMPQ…VGTS), 199–219 (GLAI…AWAT), 239–259 (LVVV…FNTY), 263–283 (VFMG…IAVL), 288–308 (FVLV…ILQV), and 338–358 (VIVR…ATLK).

This sequence belongs to the glycosyltransferase 4 family. MraY subfamily. Requires Mg(2+) as cofactor.

The protein resides in the cell inner membrane. It carries out the reaction UDP-N-acetyl-alpha-D-muramoyl-L-alanyl-gamma-D-glutamyl-meso-2,6-diaminopimeloyl-D-alanyl-D-alanine + di-trans,octa-cis-undecaprenyl phosphate = di-trans,octa-cis-undecaprenyl diphospho-N-acetyl-alpha-D-muramoyl-L-alanyl-D-glutamyl-meso-2,6-diaminopimeloyl-D-alanyl-D-alanine + UMP. The protein operates within cell wall biogenesis; peptidoglycan biosynthesis. Functionally, catalyzes the initial step of the lipid cycle reactions in the biosynthesis of the cell wall peptidoglycan: transfers peptidoglycan precursor phospho-MurNAc-pentapeptide from UDP-MurNAc-pentapeptide onto the lipid carrier undecaprenyl phosphate, yielding undecaprenyl-pyrophosphoryl-MurNAc-pentapeptide, known as lipid I. The sequence is that of Phospho-N-acetylmuramoyl-pentapeptide-transferase from Vibrio cholerae serotype O1 (strain ATCC 39541 / Classical Ogawa 395 / O395).